The following is a 694-amino-acid chain: Elongation factor G (694 aa).

In terms of domain architecture, tr-type G spans 9-288; it reads DAIRNIGIMA…VIVKWLPSPL (280 aa). Residues 18–25, 82–86, and 136–139 each bind GTP; these read AHIDAGKT, DTPGH, and NKMD.

The protein belongs to the TRAFAC class translation factor GTPase superfamily. Classic translation factor GTPase family. EF-G/EF-2 subfamily.

The protein localises to the cytoplasm. Catalyzes the GTP-dependent ribosomal translocation step during translation elongation. During this step, the ribosome changes from the pre-translocational (PRE) to the post-translocational (POST) state as the newly formed A-site-bound peptidyl-tRNA and P-site-bound deacylated tRNA move to the P and E sites, respectively. Catalyzes the coordinated movement of the two tRNA molecules, the mRNA and conformational changes in the ribosome. In Chlamydia trachomatis serovar A (strain ATCC VR-571B / DSM 19440 / HAR-13), this protein is Elongation factor G.